Consider the following 126-residue polypeptide: Histone H2B 7 (126 aa).

A compositionally biased stretch (low complexity) spans 1–12 (MPEPAKSAPAPK). Positions 1–35 (MPEPAKSAPAPKKGSKKAVTKTQKKGDKKRKRARK) are disordered. 2 positions are modified to N6-acetyllysine: Lys-6 and Lys-13. Residues 13–34 (KGSKKAVTKTQKKGDKKRKRAR) are compositionally biased toward basic residues. Ser-15 bears the Phosphoserine mark. N6-acetyllysine occurs at positions 16 and 21. Ser-113 carries O-linked (GlcNAc) serine glycosylation. A Glycyl lysine isopeptide (Lys-Gly) (interchain with G-Cter in ubiquitin) cross-link involves residue Lys-121.

Belongs to the histone H2B family. The nucleosome is a histone octamer containing two molecules each of H2A, H2B, H3 and H4 assembled in one H3-H4 heterotetramer and two H2A-H2B heterodimers. The octamer wraps approximately 147 bp of DNA. Post-translationally, monoubiquitination of Lys-121 by the BRE1 gives a specific tag for epigenetic transcriptional activation and is also prerequisite for histone H3 'Lys-4' and 'Lys-79' methylation. Phosphorylated on Ser-15 during apoptosis; which facilitates apoptotic chromatin condensation. In terms of processing, glcNAcylation at Ser-113 promotes monoubiquitination of Lys-121. It fluctuates in response to extracellular glucose, and associates with transcribed genes.

It localises to the nucleus. The protein localises to the chromosome. In terms of biological role, core component of nucleosome. Nucleosomes wrap and compact DNA into chromatin, limiting DNA accessibility to the cellular machineries which require DNA as a template. Histones thereby play a central role in transcription regulation, DNA repair, DNA replication and chromosomal stability. DNA accessibility is regulated via a complex set of post-translational modifications of histones, also called histone code, and nucleosome remodeling. The chain is Histone H2B 7 (H2B-VII) from Gallus gallus (Chicken).